A 127-amino-acid chain; its full sequence is uncharacterized protein (127 aa).

This is an uncharacterized protein from Saccharomyces cerevisiae (strain ATCC 204508 / S288c) (Baker's yeast).